Consider the following 348-residue polypeptide: Doublesex- and mab-3-related transcription factor dmd-10 (348 aa).

2 consecutive DNA-binding regions (DM) follow at residues 43-91 and 119-166; these read CQRC…YNQF and CQKC…KIRR. The interval 316-348 is disordered; the sequence is SMSMSSSPSKDDESGDEDSDGLNSNSIIDVITV.

This sequence belongs to the DMRT family. In terms of tissue distribution, dimorphically expressed in the dimorphically connected interneuron AVG; expression is observed in the AVG in males, but not in hermaphrodites.

It localises to the nucleus. Functionally, transcription factor. Plays a role in neuronal signaling in polymodal sensory neuron ASH, downstream of sensory receptor activation. Required for maintenance of AVG synapses. This chain is Doublesex- and mab-3-related transcription factor dmd-10, found in Caenorhabditis elegans.